A 406-amino-acid polypeptide reads, in one-letter code: DNA primase DnaG (406 aa).

The 87-residue stretch at 167 to 253 (DAVVIVEGRA…CVEDLSRRTV (87 aa)) folds into the Toprim domain. Positions 173, 215, and 217 each coordinate Mg(2+). The interval 259–309 (NKTPASAAAPIATTQSETAATDGSATPAPTPEPAPDTAPSPDSDGDDTEAA) is disordered. Residues 261–272 (TPASAAAPIATT) are compositionally biased toward low complexity. The segment covering 286–296 (APTPEPAPDTA) has biased composition (pro residues).

The protein belongs to the archaeal DnaG primase family. In terms of assembly, forms a ternary complex with MCM helicase and DNA. It depends on Mg(2+) as a cofactor.

The catalysed reaction is ssDNA + n NTP = ssDNA/pppN(pN)n-1 hybrid + (n-1) diphosphate.. In terms of biological role, RNA polymerase that catalyzes the synthesis of short RNA molecules used as primers for DNA polymerase during DNA replication. The polypeptide is DNA primase DnaG (Halobacterium salinarum (strain ATCC 29341 / DSM 671 / R1)).